A 595-amino-acid polypeptide reads, in one-letter code: NADH-quinone oxidoreductase subunit C/D (595 aa).

Positions 1–186 are NADH dehydrogenase I subunit C; the sequence is MVTDNSKATD…TPYFLNNAKQ (186 aa). The tract at residues 210–595 is NADH dehydrogenase I subunit D; that stretch reads DFMFLNLGPN…IDIVMADTDR (386 aa).

This sequence in the N-terminal section; belongs to the complex I 30 kDa subunit family. The protein in the C-terminal section; belongs to the complex I 49 kDa subunit family. NDH-1 is composed of 13 different subunits. Subunits NuoB, CD, E, F, and G constitute the peripheral sector of the complex.

The protein resides in the cell inner membrane. The catalysed reaction is a quinone + NADH + 5 H(+)(in) = a quinol + NAD(+) + 4 H(+)(out). NDH-1 shuttles electrons from NADH, via FMN and iron-sulfur (Fe-S) centers, to quinones in the respiratory chain. The immediate electron acceptor for the enzyme in this species is believed to be ubiquinone. Couples the redox reaction to proton translocation (for every two electrons transferred, four hydrogen ions are translocated across the cytoplasmic membrane), and thus conserves the redox energy in a proton gradient. The sequence is that of NADH-quinone oxidoreductase subunit C/D from Psychrobacter sp. (strain PRwf-1).